We begin with the raw amino-acid sequence, 492 residues long: Catalase isozyme 1 (492 aa).

Catalysis depends on residues H65 and N138. Y348 contacts heme.

This sequence belongs to the catalase family. Homotetramer. Heme serves as cofactor.

The protein resides in the peroxisome. It catalyses the reaction 2 H2O2 = O2 + 2 H2O. Occurs in almost all aerobically respiring organisms and serves to protect cells from the toxic effects of hydrogen peroxide. This is Catalase isozyme 1 (CAT1) from Gossypium hirsutum (Upland cotton).